A 331-amino-acid polypeptide reads, in one-letter code: Cytosolic arginine sensor for mTORC1 subunit 1 (331 aa).

S14 is modified (phosphoserine). 2 ACT domains span residues 72–137 (AEAT…HTLA) and 259–320 (GELW…DILQ). Residues 110–111 (SV), G273, 279–280 (IV), and 299–303 (TFNFD) each bind L-arginine.

This sequence belongs to the GATS family. Forms homodimers and heterodimers with CASTOR2. Interacts with the GATOR2 complex which is composed of MIOS, SEC13, SEH1L, WDR24 and WDR59; the interaction is negatively regulated by arginine. Interacts with TM4SF5; the interaction is positively regulated by leucine and is negatively regulated by arginine. Phosphorylation at Ser-14 by AKT1, promoting the interaction between CASTOR1 and RNF167. In terms of processing, ubiquitinated by RNF167 via 'Lys-29'-polyubiquitination, leading to its degradation, releasing the GATOR2 complex. Ubiquitination by RNF167 is promoted by phosphorylation at Ser-14 by AKT1.

Its subcellular location is the cytoplasm. It is found in the cytosol. In terms of biological role, functions as an intracellular arginine sensor within the amino acid-sensing branch of the TORC1 signaling pathway. As a homodimer or a heterodimer with CASTOR2, binds and inhibits the GATOR subcomplex GATOR2 and thereby mTORC1. Binding of arginine to CASTOR1 allosterically disrupts the interaction of CASTOR1-containing dimers with GATOR2 which can in turn activate mTORC1 and the TORC1 signaling pathway. The polypeptide is Cytosolic arginine sensor for mTORC1 subunit 1 (Mus musculus (Mouse)).